Reading from the N-terminus, the 31-residue chain is Cytochrome b6-f complex subunit 6 (31 aa).

A helical membrane pass occupies residues 4–24; sequence LTSYFGFLLAALTITSVLFIG.

It belongs to the PetL family. In terms of assembly, the 4 large subunits of the cytochrome b6-f complex are cytochrome b6, subunit IV (17 kDa polypeptide, PetD), cytochrome f and the Rieske protein, while the 4 small subunits are PetG, PetL, PetM and PetN. The complex functions as a dimer.

The protein localises to the plastid. It is found in the chloroplast thylakoid membrane. Component of the cytochrome b6-f complex, which mediates electron transfer between photosystem II (PSII) and photosystem I (PSI), cyclic electron flow around PSI, and state transitions. PetL is important for photoautotrophic growth as well as for electron transfer efficiency and stability of the cytochrome b6-f complex. In Silene conica (Striped corn catchfly), this protein is Cytochrome b6-f complex subunit 6.